The following is a 232-amino-acid chain: Ribose-5-phosphate isomerase A (232 aa).

Substrate contacts are provided by residues 31 to 34, 87 to 90, and 100 to 103; these read TGST, DGAD, and KGGG. Glu-109 acts as the Proton acceptor in catalysis. Lys-127 contributes to the substrate binding site.

It belongs to the ribose 5-phosphate isomerase family. Homodimer.

The enzyme catalyses aldehydo-D-ribose 5-phosphate = D-ribulose 5-phosphate. It functions in the pathway carbohydrate degradation; pentose phosphate pathway; D-ribose 5-phosphate from D-ribulose 5-phosphate (non-oxidative stage): step 1/1. Functionally, catalyzes the reversible conversion of ribose-5-phosphate to ribulose 5-phosphate. This chain is Ribose-5-phosphate isomerase A, found in Bifidobacterium longum (strain DJO10A).